Consider the following 305-residue polypeptide: UDP-3-O-acyl-N-acetylglucosamine deacetylase (305 aa).

Histidine 79, histidine 238, and aspartate 242 together coordinate Zn(2+). Histidine 265 functions as the Proton donor in the catalytic mechanism.

The protein belongs to the LpxC family. Requires Zn(2+) as cofactor.

The enzyme catalyses a UDP-3-O-[(3R)-3-hydroxyacyl]-N-acetyl-alpha-D-glucosamine + H2O = a UDP-3-O-[(3R)-3-hydroxyacyl]-alpha-D-glucosamine + acetate. Its pathway is glycolipid biosynthesis; lipid IV(A) biosynthesis; lipid IV(A) from (3R)-3-hydroxytetradecanoyl-[acyl-carrier-protein] and UDP-N-acetyl-alpha-D-glucosamine: step 2/6. In terms of biological role, catalyzes the hydrolysis of UDP-3-O-myristoyl-N-acetylglucosamine to form UDP-3-O-myristoylglucosamine and acetate, the committed step in lipid A biosynthesis. This is UDP-3-O-acyl-N-acetylglucosamine deacetylase from Sodalis glossinidius (strain morsitans).